Here is a 1644-residue protein sequence, read N- to C-terminus: MEEPKTSKNENHEPKKNIICEESKAVKIISNQTLKPRNDKSEIGTSSLNRNSSKKTKQNDICIEKTEAKSCKVNAASVPGPKDLGLVHRDQSHCKMKKLPNSPMKAQKGSSQTKLEKTPSLQTKAEKVPKSPNLPVKAEKAPCTTAEATTEKALNSQRKEENTPTSQMKLQKTPRSPLEPENVPSLLLKENVKQTESQQTGKKLTSSFVSMDKRKSEALQGEKSALENSSLSQKQQTQTDNIADSDDSASGIEDTADDLSKMKSEESNKENSSEMDYLENATVIDESALTPEQRLGLKQAEERLERDHIFRLEKRSPEYTNCRYLCKLCLIHIENIQGAHKHIKEKRHKKNILEKQEESELRSLPSPSSAHLAALSVAVVELAKEQGITDDDLRIRQDIVEEMSKVIMTFLPECSLRLYGSSLTKFALKSSDVNIDIKFPPKMNHPDLLIQVLGILKKSALYIDVESDFHAKVPVVVCKDRKSALLCRVSAGNDMACLTTDLLAALGKVEPVFTPLVLAFRYWAKLCYIDSQTDGGIPSYCFALMVMFFLQQRKPPLLPCLLGSWIEGFDPKRMDDFQLKGIVEEKFVKWEYNSSSATEKNLIADENKAKADEPKDDTKKTETDNQSNAAKAKHGKSPLTLEAPNQVPLGQLWLELLKFYTLDFALEEYVICVRIQDILTRENKNWPKRRIAIEDPFSVKRNVARSLNSQLVYEYVVERFRAAYRYFACPQKKGGNKSTMDPKKKEKGKLSSKKPVKSDCSATNCCILGESAEKIHMERGQPAKHDETEFTSQRCIVDNDSLLVNELGLANHGQDSSSLSTASGGSDLKQKSAEKQGDLTPSETSLKKELSQCICIGTPDGAESAGTDCRSNLEMDSSHQIVCNNVSATSCNCKATEVTSDLVDEDNLPSQELYYVFDKFILTSGKPPTIVCSICKKDGHSKNDCPEDFRKIDLKPLPPMTNRFREILDLVCKRCFDELSPPCSEQHNREQILIGLEKFIQKEYDEKARLCLFGSSKNGFGFRDSDLDICMTLEGHENAEKLNCKEIIENLAKILKRHPGLRNILPITTAKVPIVKFEHRRSGLEGDISLYNTLAQHNTRMLATYAAIDPRVQYLGYTMKVFAKRCDIGDASRGSLSSYAYILMVLYFLQQRKPPVIPVLQEIFDGKQIPQRMVDGWNAFFFDKTEELKKRLPSLGKNTESLGELWLGLLRFYTEEFDFKEYVISIRQKKLLTTFEKQWTSKCIAIEDPFDLNHNLGAGVSRKMTNFIMKAFINGRKLFGTPFYPLIGREAEYFFDSRVLTDGELAPNDRCCRVCGKIGHYMKDCPKRKRLKKKDSEEEKEGNEEEKDSRDLLDSRDLRCFICGDAGHVRRECPEVKMARQRNSSVAAAQLVRNLVNAQQVAGSAQQQSDQSIRTRQSSECSDSPSYSPQPQPFPQNSPQPSALPPPPSQPGSQPKLGPPQQGGQPPHQVQMPLYNFPQSPPAHYSPMHSMGLLPMHPLQIPAPSWPIHGPMLHSAPGSTPSNIGLNDPSIIFAQPAARPMAIPSPSHDGHWPRTVAPNSLVNNGAVGNSEPRFRGLNPPIPWEHAPRHFPLVPASWPYGLHQNFMHQGNPRFQPKPFYAQADRCATRRCRERCPHPPRGNVSE.

Disordered regions lie at residues 30–60 (SNQT…KQND) and 75–277 (AASV…EMDY). Serine 102 is modified (phosphoserine). A compositionally biased stretch (polar residues) spans 108 to 123 (KGSSQTKLEKTPSLQT). Serine 131 bears the Phosphoserine mark. Polar residues-rich tracts occupy residues 146–156 (AEATTEKALNS) and 163–174 (TPTSQMKLQKTP). A Phosphoserine modification is found at serine 176. Composition is skewed to polar residues over residues 194–209 (QTES…SSFV) and 226–242 (LENS…TDNI). A compositionally biased stretch (basic and acidic residues) spans 258-272 (DLSKMKSEESNKENS). Residues 273-353 (SEMDYLENAT…KEKRHKKNIL (81 aa)) form a required for interaction with LIN28A and pre-let-7 RNA region. 4 residues coordinate Zn(2+): cysteine 326, cysteine 329, histidine 342, and histidine 348. Basic and acidic residues predominate over residues 603-623 (IADENKAKADEPKDDTKKTET). The disordered stretch occupies residues 603 to 640 (IADENKAKADEPKDDTKKTETDNQSNAAKAKHGKSPLT). The region spanning 649 to 698 (LGQLWLELLKFYTLDFALEEYVICVRIQDILTRENKNWPKRRIAIEDPFS) is the PAP-associated 1 domain. Disordered stretches follow at residues 733–759 (KGGN…VKSD) and 812–841 (HGQD…DLTP). Residues 745–755 (KEKGKLSSKKP) are compositionally biased toward basic residues. Low complexity predominate over residues 815–827 (DSSSLSTASGGSD). Over residues 828-837 (LKQKSAEKQG) the composition is skewed to basic and acidic residues. The segment at 918-1634 (DKFILTSGKP…CATRRCRERC (717 aa)) is sufficient for monouridylation activity. Residues 930-947 (IVCSICKKDGHSKNDCPE) form a CCHC-type 1 zinc finger. UTP-binding positions include 1015-1018 (SSKN), 1025-1028 (SDLD), asparagine 1098, lysine 1120, 1138-1142 (SYAYI), and histidine 1254. Residues aspartate 1026 and aspartate 1028 each coordinate Mg(2+). The 54-residue stretch at 1201–1254 (SLGELWLGLLRFYTEEFDFKEYVISIRQKKLLTTFEKQWTSKCIAIEDPFDLNH) folds into the PAP-associated 2 domain. Residues 1310 to 1327 (RCCRVCGKIGHYMKDCPK) form a CCHC-type 2 zinc finger. Positions 1329–1350 (KRLKKKDSEEEKEGNEEEKDSR) are disordered. Residues 1358 to 1375 (LRCFICGDAGHVRRECPE) form a CCHC-type 3 zinc finger. Residues 1402 to 1427 (AGSAQQQSDQSIRTRQSSECSDSPSY) show a composition bias toward low complexity. Residues 1402 to 1483 (AGSAQQQSDQ…LYNFPQSPPA (82 aa)) are disordered. The span at 1428 to 1450 (SPQPQPFPQNSPQPSALPPPPSQ) shows a compositional bias: pro residues. Over residues 1451–1473 (PGSQPKLGPPQQGGQPPHQVQMP) the composition is skewed to low complexity. At arginine 1624 the chain carries Omega-N-methylarginine.

Belongs to the DNA polymerase type-B-like family. In terms of assembly, interacts with LIN28A in the presence of pre-let-7 RNA. Interacts with T2BP. Interacts with MOV10; the interaction is RNA-dependent. Mg(2+) serves as cofactor. Mn(2+) is required as a cofactor. Ubiquitously expressed.

Its subcellular location is the nucleus. It is found in the cytoplasm. The protein resides in the cytoplasmic ribonucleoprotein granule. The enzyme catalyses RNA(n) + UTP = RNA(n)-3'-uridine ribonucleotide + diphosphate. Uridylyltransferase that mediates the terminal uridylation of mRNAs with short (less than 25 nucleotides) poly(A) tails, hence facilitating global mRNA decay. Essential for both oocyte maturation and fertility. Through 3' terminal uridylation of mRNA, sculpts, with TUT7, the maternal transcriptome by eliminating transcripts during oocyte growth. Involved in microRNA (miRNA)-induced gene silencing through uridylation of deadenylated miRNA targets. Also functions as an integral regulator of microRNA biogenesiS using 3 different uridylation mechanisms. Acts as a suppressor of miRNA biogenesis by mediating the terminal uridylation of some miRNA precursors, including that of let-7 (pre-let-7), miR107, miR-143 and miR-200c. Uridylated miRNAs are not processed by Dicer and undergo degradation. Degradation of pre-let-7 contributes to the maintenance of embryonic stem (ES) cell pluripotency. Also catalyzes the 3' uridylation of miR-26A, a miRNA that targets IL6 transcript. This abrogates the silencing of IL6 transcript, hence promoting cytokine expression. In the absence of LIN28A, TUT7 and TUT4 monouridylate group II pre-miRNAs, which includes most of pre-let7 members, that shapes an optimal 3' end overhang for efficient processing. Add oligo-U tails to truncated pre-miRNAS with a 5' overhang which may promote rapid degradation of non-functional pre-miRNA species. May also suppress Toll-like receptor-induced NF-kappa-B activation via binding to T2BP. Does not play a role in replication-dependent histone mRNA degradation. Due to functional redundancy between TUT4 and TUT7, the identification of the specific role of each of these proteins is difficult. TUT4 and TUT7 restrict retrotransposition of long interspersed element-1 (LINE-1) in cooperation with MOV10 counteracting the RNA chaperonne activity of L1RE1. TUT7 uridylates LINE-1 mRNAs in the cytoplasm which inhibits initiation of reverse transcription once in the nucleus, whereas uridylation by TUT4 destabilizes mRNAs in cytoplasmic ribonucleoprotein granules. The protein is Terminal uridylyltransferase 4 of Mus musculus (Mouse).